A 217-amino-acid polypeptide reads, in one-letter code: Somatotropin (217 aa).

The first 26 residues, 1–26, serve as a signal peptide directing secretion; that stretch reads MAPGSWFSPLFIAVITLGLQWPKEAA. Position 46 (His46) interacts with Zn(2+). Cys79 and Cys190 are oxidised to a cystine. Residue Glu199 coordinates Zn(2+). Cys207 and Cys215 are oxidised to a cystine.

The protein belongs to the somatotropin/prolactin family.

It localises to the secreted. Growth hormone plays an important role in growth control. The protein is Somatotropin (GH) of Struthio camelus (Common ostrich).